A 607-amino-acid polypeptide reads, in one-letter code: V-type proton ATPase catalytic subunit A (607 aa).

251–258 (GAFGCGKT) is an ATP binding site.

This sequence belongs to the ATPase alpha/beta chains family. As to quaternary structure, V-ATPase is a heteromultimeric enzyme composed of a peripheral catalytic V1 complex (components A to H) attached to an integral membrane V0 proton pore complex (components: a, c, c', c'', d, e, f and VOA1).

It is found in the vacuole membrane. The enzyme catalyses ATP + H2O + 4 H(+)(in) = ADP + phosphate + 5 H(+)(out). Catalytic subunit of the V1 complex of vacuolar(H+)-ATPase (V-ATPase), a multisubunit enzyme composed of a peripheral complex (V1) that hydrolyzes ATP and a membrane integral complex (V0) that translocates protons. V-ATPase is responsible for acidifying and maintaining the pH of intracellular compartments. This chain is V-type proton ATPase catalytic subunit A (VMA1), found in Encephalitozoon cuniculi (strain GB-M1) (Microsporidian parasite).